Here is a 321-residue protein sequence, read N- to C-terminus: Probable cell division protein WhiA (321 aa).

Residues 276 to 309 (NLKELGELLEPPVGKSGVNHRLRKLEKIAEQLHQ) constitute a DNA-binding region (H-T-H motif).

The protein belongs to the WhiA family.

Involved in cell division and chromosome segregation. The polypeptide is Probable cell division protein WhiA (Natranaerobius thermophilus (strain ATCC BAA-1301 / DSM 18059 / JW/NM-WN-LF)).